A 238-amino-acid chain; its full sequence is tRNA (guanine-N(7)-)-methyltransferase (238 aa).

4 residues coordinate S-adenosyl-L-methionine: E68, E93, D120, and D143. Residue D143 is part of the active site. Substrate-binding positions include K147, D179, and 216 to 219 (TKFE).

Belongs to the class I-like SAM-binding methyltransferase superfamily. TrmB family.

The catalysed reaction is guanosine(46) in tRNA + S-adenosyl-L-methionine = N(7)-methylguanosine(46) in tRNA + S-adenosyl-L-homocysteine. The protein operates within tRNA modification; N(7)-methylguanine-tRNA biosynthesis. Its function is as follows. Catalyzes the formation of N(7)-methylguanine at position 46 (m7G46) in tRNA. In Shewanella frigidimarina (strain NCIMB 400), this protein is tRNA (guanine-N(7)-)-methyltransferase.